A 131-amino-acid polypeptide reads, in one-letter code: Ribonuclease P protein component (131 aa).

This sequence belongs to the RnpA family. Consists of a catalytic RNA component (M1 or rnpB) and a protein subunit.

The enzyme catalyses Endonucleolytic cleavage of RNA, removing 5'-extranucleotides from tRNA precursor.. RNaseP catalyzes the removal of the 5'-leader sequence from pre-tRNA to produce the mature 5'-terminus. It can also cleave other RNA substrates such as 4.5S RNA. The protein component plays an auxiliary but essential role in vivo by binding to the 5'-leader sequence and broadening the substrate specificity of the ribozyme. This chain is Ribonuclease P protein component, found in Cyanothece sp. (strain PCC 7425 / ATCC 29141).